The primary structure comprises 308 residues: Coenzyme PQQ synthesis protein B (308 aa).

This sequence belongs to the PqqB family.

It participates in cofactor biosynthesis; pyrroloquinoline quinone biosynthesis. Its function is as follows. May be involved in the transport of PQQ or its precursor to the periplasm. The polypeptide is Coenzyme PQQ synthesis protein B (Klebsiella pneumoniae (strain 342)).